The chain runs to 320 residues: Probable movement protein (320 aa).

Active-site residues include histidine 144, aspartate 171, and serine 199. Disordered stretches follow at residues 251–270 (RRSRSISAKRGPNSRVQEKR) and 286–320 (EFGRRASASEAPPGRSISMEDSHRPGKGTSDGSSP).

Belongs to the tobamoviruses movement protein family.

May play a role in virus cell to cell movement by increasing the size exclusion limit of plasmodesmata and forming a complex with viral RNA to assist its movement. May also have a papain-like protease activity and cleave the genome polyprotein. The polypeptide is Probable movement protein (Malus sylvestris (European crab apple)).